Consider the following 440-residue polypeptide: Xaa-Pro dipeptidase (440 aa).

Residues Asp-244, Asp-255, His-335, Glu-380, and Glu-419 each coordinate Mn(2+).

The protein belongs to the peptidase M24B family. Bacterial-type prolidase subfamily. Mn(2+) serves as cofactor.

It catalyses the reaction Xaa-L-Pro dipeptide + H2O = an L-alpha-amino acid + L-proline. Functionally, splits dipeptides with a prolyl residue in the C-terminal position. The sequence is that of Xaa-Pro dipeptidase from Shewanella baltica (strain OS185).